The following is a 152-amino-acid chain: Urease accessory protein UreE (152 aa).

This sequence belongs to the UreE family.

It is found in the cytoplasm. Functionally, involved in urease metallocenter assembly. Binds nickel. Probably functions as a nickel donor during metallocenter assembly. The polypeptide is Urease accessory protein UreE (Enterobacter sp. (strain 638)).